An 89-amino-acid polypeptide reads, in one-letter code: Small ribosomal subunit protein uS14 (89 aa).

It belongs to the universal ribosomal protein uS14 family. Part of the 30S ribosomal subunit. Contacts proteins S3 and S10.

Functionally, binds 16S rRNA, required for the assembly of 30S particles and may also be responsible for determining the conformation of the 16S rRNA at the A site. This chain is Small ribosomal subunit protein uS14, found in Cytophaga hutchinsonii (strain ATCC 33406 / DSM 1761 / CIP 103989 / NBRC 15051 / NCIMB 9469 / D465).